The sequence spans 248 residues: ATP synthase subunit a, chloroplastic (248 aa).

Helical transmembrane passes span 38-58, 96-116, 135-155, 200-220, and 221-241; these read QVLLTSWVVIAVLLGSATIAV, VPFIGTMFLFIFVSNWSGALL, INTTVALALLTSVAYFYAGLT, LVVAVLVSLVPLIVPIPVMFL, and GLFTSGIQALIFATLAAAYIG.

Belongs to the ATPase A chain family. In terms of assembly, F-type ATPases have 2 components, CF(1) - the catalytic core - and CF(0) - the membrane proton channel. CF(1) has five subunits: alpha(3), beta(3), gamma(1), delta(1), epsilon(1). CF(0) has four main subunits: a, b, b' and c.

It is found in the plastid. It localises to the chloroplast thylakoid membrane. In terms of biological role, key component of the proton channel; it plays a direct role in the translocation of protons across the membrane. This Pinus thunbergii (Japanese black pine) protein is ATP synthase subunit a, chloroplastic.